Here is an 86-residue protein sequence, read N- to C-terminus: Kappa-theraphotoxin-Cg1a 2 (86 aa).

A signal peptide spans 1–21 (MKVSVVITLAVLGVMFVWASA). A propeptide spanning residues 22-50 (AELEERGSDQRDSPAWLKSMERIFQSEER) is cleaved from the precursor. Disulfide bonds link Cys52/Cys66, Cys59/Cys71, and Cys65/Cys78. Phe84 bears the Phenylalanine amide mark.

This sequence belongs to the neurotoxin 10 (Hwtx-1) family. 28 (Jztx-11) subfamily. Expressed by the venom gland.

The protein localises to the secreted. Functionally, this toxin acts as a voltage-dependent gating-modifier. It inhibits the sodium conductance (IC(50)=124 nM) and slows the fast inactivation (EC(50)=1180 nM) of Nav1.5/SCN5A. It significantly shifts the activation to more depolarized voltages and decreases the deactivation of Nav1.5 currents upon extreme depolarization, but only slightly affects voltage-dependence of steady-state inactivation. In addition, this toxin causes an approximately five-fold decrease in the rate of recovery from inactivation and an approximately 1.9-fold reduction in the closed-state inactivation rate. This toxin integrates the functions of site 3 toxins (alpha-scorpion toxins) with site 4 toxins (beta-scorpion and spider toxins) by targeting multiple sites on Nav1.5. Also shows inhibition of voltage-gated potassium channels (5 uM completely inhibits Kv2.1/KCNB1, whereas 5 uM moderately inhibits Kv4.2/KCND2 Kv4.1/KCND1 channels). This is Kappa-theraphotoxin-Cg1a 2 from Chilobrachys guangxiensis (Chinese earth tiger tarantula).